Here is a 406-residue protein sequence, read N- to C-terminus: L-carnitine CoA-transferase (406 aa).

The CoA site is built by lysine 98 and arginine 105. The active-site Nucleophile is the aspartate 170.

This sequence belongs to the CoA-transferase III family. CaiB subfamily. In terms of assembly, homodimer.

The protein resides in the cytoplasm. It catalyses the reaction crotonobetainyl-CoA + (R)-carnitine = crotonobetaine + (R)-carnitinyl-CoA. The catalysed reaction is 4-(trimethylamino)butanoyl-CoA + (R)-carnitine = (R)-carnitinyl-CoA + 4-(trimethylamino)butanoate. Its pathway is amine and polyamine metabolism; carnitine metabolism. In terms of biological role, catalyzes the reversible transfer of the CoA moiety from gamma-butyrobetainyl-CoA to L-carnitine to generate L-carnitinyl-CoA and gamma-butyrobetaine. Is also able to catalyze the reversible transfer of the CoA moiety from gamma-butyrobetainyl-CoA or L-carnitinyl-CoA to crotonobetaine to generate crotonobetainyl-CoA. The chain is L-carnitine CoA-transferase (caiB) from Proteus sp. (strain LE138).